Consider the following 216-residue polypeptide: Peroxiredoxin (216 aa).

The Thioredoxin domain occupies 2–158; the sequence is IVIGEKFPEV…ILRLVKALKI (157 aa). Cysteine 46 serves as the catalytic Cysteine sulfenic acid (-SOH) intermediate. Arginine 121 lines the substrate pocket. A disulfide bond links cysteine 205 and cysteine 211.

The protein belongs to the peroxiredoxin family. Prx6 subfamily. As to quaternary structure, homodecamer. Pentamer of dimers that assemble into a ring structure.

The protein resides in the cytoplasm. The enzyme catalyses a hydroperoxide + [thioredoxin]-dithiol = an alcohol + [thioredoxin]-disulfide + H2O. Its function is as follows. Thiol-specific peroxidase that catalyzes the reduction of hydrogen peroxide and organic hydroperoxides to water and alcohols, respectively. Plays a role in cell protection against oxidative stress by detoxifying peroxides. This chain is Peroxiredoxin, found in Pyrococcus furiosus (strain ATCC 43587 / DSM 3638 / JCM 8422 / Vc1).